A 421-amino-acid chain; its full sequence is 3-hydroxy-3-methylglutaryl-coenzyme A reductase (421 aa).

Catalysis depends on charge relay system residues Glu109, Lys240, and Asp315. His410 acts as the Proton donor in catalysis.

Belongs to the HMG-CoA reductase family.

It carries out the reaction (R)-mevalonate + 2 NADP(+) + CoA = (3S)-3-hydroxy-3-methylglutaryl-CoA + 2 NADPH + 2 H(+). The protein operates within metabolic intermediate biosynthesis; (R)-mevalonate biosynthesis; (R)-mevalonate from acetyl-CoA: step 3/3. Its function is as follows. Converts HMG-CoA to mevalonate. This chain is 3-hydroxy-3-methylglutaryl-coenzyme A reductase (hmgA), found in Aeropyrum pernix (strain ATCC 700893 / DSM 11879 / JCM 9820 / NBRC 100138 / K1).